The sequence spans 328 residues: dITP/XTP pyrophosphatase (328 aa).

Positions methionine 1 to isoleucine 129 are unknown. An NTP pyrophosphatase region spans residues isoleucine 130–glutamine 324. A substrate-binding site is contributed by threonine 134 to lysine 139. The active-site Proton acceptor is aspartate 196. Residue aspartate 196 coordinates Mg(2+). Residues serine 197, phenylalanine 280–aspartate 283, lysine 303, and histidine 308–arginine 309 each bind substrate.

The protein belongs to the HAM1 NTPase family. As to quaternary structure, homodimer. The cofactor is Mg(2+).

The catalysed reaction is XTP + H2O = XMP + diphosphate + H(+). The enzyme catalyses dITP + H2O = dIMP + diphosphate + H(+). It catalyses the reaction ITP + H2O = IMP + diphosphate + H(+). In terms of biological role, pyrophosphatase that catalyzes the hydrolysis of nucleoside triphosphates to their monophosphate derivatives, with a high preference for the non-canonical purine nucleotides XTP (xanthosine triphosphate), dITP (deoxyinosine triphosphate) and ITP. Seems to function as a house-cleaning enzyme that removes non-canonical purine nucleotides from the nucleotide pool, thus preventing their incorporation into DNA/RNA and avoiding chromosomal lesions. This is dITP/XTP pyrophosphatase from Streptococcus pyogenes serotype M3 (strain ATCC BAA-595 / MGAS315).